Consider the following 769-residue polypeptide: Signal transducer and activator of transcription 3.1 (769 aa).

Residues 150-162 (DVRKKVQDLEQKM) carry the Essential for nuclear import motif. Residues 580 to 670 (WNEGYIMGFI…DATNILVSPL (91 aa)) form the SH2 domain. The residue at position 728 (serine 728) is a Phosphoserine; by NLK.

The protein belongs to the transcription factor STAT family. Forms a homodimer or a heterodimer with a related family member, such as stat1. Interacts with nlk.2. Phosphorylation of both tyrosine and serine residues, together with dimerization, is required for mesoderm induction.

Its subcellular location is the cytoplasm. It is found in the nucleus. Transcription factor that binds to target promoter sequences and activates transcription upon il6st/gp130 stimulation. Mediates ventralization of embryos, at least in part via inhibition of smad2 signaling. Required for hairy2 to induce dll1/delta1 and promote neural crest cell proliferation and differentiation. Involved in TGFbeta-mediated mesoderm induction in early embryos, acting downstream of map3k7/tak1 and nlk.2. This chain is Signal transducer and activator of transcription 3.1 (stat3.1), found in Xenopus laevis (African clawed frog).